Reading from the N-terminus, the 111-residue chain is Large ribosomal subunit protein uL22 (111 aa).

This sequence belongs to the universal ribosomal protein uL22 family. Part of the 50S ribosomal subunit.

In terms of biological role, this protein binds specifically to 23S rRNA; its binding is stimulated by other ribosomal proteins, e.g. L4, L17, and L20. It is important during the early stages of 50S assembly. It makes multiple contacts with different domains of the 23S rRNA in the assembled 50S subunit and ribosome. The globular domain of the protein is located near the polypeptide exit tunnel on the outside of the subunit, while an extended beta-hairpin is found that lines the wall of the exit tunnel in the center of the 70S ribosome. This chain is Large ribosomal subunit protein uL22, found in Clostridium perfringens (strain ATCC 13124 / DSM 756 / JCM 1290 / NCIMB 6125 / NCTC 8237 / Type A).